The chain runs to 984 residues: MASNPERGEILLTELQGDSRSLPFSENVSAVQKLDFSDTMVQQKLDDIKDRIKREIRKELKIKEGAENLRKVTTDKKSLAYVDNILKKSNKKLEELHHKLQELNAHIVVSDPEDITDCPRTPDTPNNDPRCSTSNNRLKALQKQLDIELKVKQGAENMIQMYSNGSSKDRKLHGTAQQLLQDSKTKIEVIRMQILQAVQTNELAFDNAKPVISPLELRMEELRHHFRIEFAVAEGAKNVMKLLGSGKVTDRKALSEAQARFNESSQKLDLLKYSLEQRLNEVPKNHPKSRIIIEELSLVAASPTLSPRQSMISTQNQYSTLSKPAALTGTLEVRLMGCQDILENVPGRSKATSVALPGWSPSETRSSFMSRTSKSKSGSSRNLLKTDDLSNDVCAVLKLDNTVVGQTSWKPISNQSWDQKFTLELDRSRELEISVYWRDWRSLCAVKFLRLEDFLDNQRHGMCLYLEPQGTLFAEVTFFNPVIERRPKLQRQKKIFSKQQGKTFLRAPQMNINIATWGRLVRRAIPTVNHSGTFSPQAPVPTTVPVVDVRIPQLAPPASDSTVTKLDFDLEPEPPPAPPRASSLGEIDESSELRVLDIPGQDSETVFDIQNDRNSILPKSQSEYKPDTPQSGLEYSGIQELEDRRSQQRFQFNLQDFRCCAVLGRGHFGKVLLAEYKNTNEMFAIKALKKGDIVARDEVDSLMCEKRIFETVNSVRHPFLVNLFACFQTKEHVCFVMEYAAGGDLMMHIHTDVFSEPRAVFYAACVVLGLQYLHEHKIVYRDLKLDNLLLDTEGFVKIADFGLCKEGMGYGDRTSTFCGTPEFLAPEVLTETSYTRAVDWWGLGVLIYEMLVGESPFPGDDEEEVFDSIVNDEVRYPRFLSTEAISIMRRLLRRNPERRLGASEKDAEDVKKHPFFRLIDWSALMDKKVKPPFIPTIRGREDVSNFDDEFTSEAPILTPPREPRILSEEEQEMFRDFDYIADWC.

Ser-21 bears the Phosphoserine mark. One can recognise an REM-1 1 domain in the interval 33 to 109 (KLDFSDTMVQ…LQELNAHIVV (77 aa)). Lys-77 bears the N6-acetyllysine mark. Ser-110 is modified (phosphoserine). The segment at 114–133 (DITDCPRTPDTPNNDPRCST) is disordered. 2 positions are modified to phosphothreonine: Thr-121 and Thr-124. REM-1 domains are found at residues 121–203 (TPDT…TNEL) and 204–284 (AFDN…EVPK). The span at 123–133 (DTPNNDPRCST) shows a compositional bias: polar residues. Ser-302, Ser-306, Ser-360, and Ser-362 each carry phosphoserine. The tract at residues 351–383 (ATSVALPGWSPSETRSSFMSRTSKSKSGSSRNL) is disordered. Positions 353 to 473 (SVALPGWSPS…LYLEPQGTLF (121 aa)) constitute a C2 domain. Low complexity predominate over residues 364–381 (TRSSFMSRTSKSKSGSSR). The tract at residues 382-463 (NLLKTDDLSN…FLDNQRHGMC (82 aa)) is necessary to rescue apical junction formation. Ser-535, Ser-583, and Ser-620 each carry phosphoserine. Residues 558 to 584 (ASDSTVTKLDFDLEPEPPPAPPRASSL) form a disordered region. A Phosphothreonine modification is found at Thr-628. Ser-631 bears the Phosphoserine mark. Residues 657 to 916 (FRCCAVLGRG…AEDVKKHPFF (260 aa)) form the Protein kinase domain. ATP contacts are provided by residues 663-671 (LGRGHFGKV) and Lys-686. The active-site Proton acceptor is the Asp-782. Thr-816 bears the Phosphothreonine; by PDPK1 mark. A necessary for the catalytic activity region spans residues 917-977 (RLIDWSALMD…EEEQEMFRDF (61 aa)). The AGC-kinase C-terminal domain maps to 917–984 (RLIDWSALMD…RDFDYIADWC (68 aa)). A Phosphoserine modification is found at Ser-952. The residue at position 958 (Thr-958) is a Phosphothreonine. Positions 978–984 (DYIADWC) are negatively regulates the responsiveness of the catalytic activity by cardiolipin and is required for optimal activation by the GTP-bound RhoA.

It belongs to the protein kinase superfamily. AGC Ser/Thr protein kinase family. PKC subfamily. Interacts (via the REM repeats) with RHOA (GTP-bound form preferentially) and interacts (via the REM repeats) with RAC1 (GTP-bound form preferentially); the interactions induce its autophosphorylation. Interacts with RHOC. Interacts with NCK1 and NCK2. Interacts with NCK1 (via SH3 domains). Interacts with CD44. Interacts (via C-terminal kinase domain) with PDPK1; the interaction stimulates PDPK1 kinase activity. Interacts with MAP3K2; the interaction activates PRK2 kinase activity in a MAP3K2-independent kinase activity. Interacts (via C-terminal domain) with AKT1; the interaction occurs with the C-terminal cleavage product of PRK2 in apoptotic cells. Interacts (via C-terminus) with PTPN13 (via PDZ 3 domain). Interacts with CDK10. As to quaternary structure, (Microbial infection) Interacts with HCV NS5B (via N-terminal finger domain). Autophosphorylated. Phosphorylated during mitosis. Phosphorylated by CDK10. In terms of processing, activated by limited proteolysis with trypsin. Proteolytically cleaved by caspase-3 during the induction of apoptotic cell death. Ubiquitous. Expressed in numerous tumor cell lines, especially in bladder tumor cells.

It localises to the cytoplasm. Its subcellular location is the nucleus. The protein localises to the membrane. The protein resides in the cell projection. It is found in the lamellipodium. It localises to the cytoskeleton. Its subcellular location is the cleavage furrow. The protein localises to the midbody. The protein resides in the cell junction. It carries out the reaction L-seryl-[protein] + ATP = O-phospho-L-seryl-[protein] + ADP + H(+). The catalysed reaction is L-threonyl-[protein] + ATP = O-phospho-L-threonyl-[protein] + ADP + H(+). With respect to regulation, kinase activity is activated upon binding to GTP-bound Rhoa/Rac1 GTPases. Activated by caspase-3 (CASP3) cleavage during apoptosis. Activated by lipids, particularly cardiolipin and to a lesser extent by other acidic phospholipids and unsaturated fatty acids. Two specific sites, Thr-816 (activation loop of the kinase domain) and Thr-958 (turn motif), need to be phosphorylated for its full activation. In terms of biological role, PKC-related serine/threonine-protein kinase and Rho/Rac effector protein that participates in specific signal transduction responses in the cell. Plays a role in the regulation of cell cycle progression, actin cytoskeleton assembly, cell migration, cell adhesion, tumor cell invasion and transcription activation signaling processes. Phosphorylates CTTN in hyaluronan-induced astrocytes and hence decreases CTTN ability to associate with filamentous actin. Phosphorylates HDAC5, therefore lead to impair HDAC5 import. Direct RhoA target required for the regulation of the maturation of primordial junctions into apical junction formation in bronchial epithelial cells. Required for G2/M phases of the cell cycle progression and abscission during cytokinesis in a ECT2-dependent manner. Stimulates FYN kinase activity that is required for establishment of skin cell-cell adhesion during keratinocytes differentiation. Regulates epithelial bladder cells speed and direction of movement during cell migration and tumor cell invasion. Inhibits Akt pro-survival-induced kinase activity. Mediates Rho protein-induced transcriptional activation via the c-fos serum response factor (SRF). Involved in the negative regulation of ciliogenesis. Its function is as follows. (Microbial infection) Phosphorylates HCV NS5B leading to stimulation of HCV RNA replication. This chain is Serine/threonine-protein kinase N2 (PKN2), found in Homo sapiens (Human).